The following is an 81-amino-acid chain: Centromere protein X (81 aa).

Methionine 1 carries the post-translational modification N-acetylmethionine.

It belongs to the CENP-X/MHF2 family. Heterodimer with CENPX, sometimes called MHF; this interaction stabilizes both partners. MHF heterodimers can assemble to form tetrameric structures. MHF also coassemble with CENPT-CENPW heterodimers at centromeres to form the tetrameric CENP-T-W-S-X complex. Forms a discrete complex with FANCM and CENPX, called FANCM-MHF; this interaction, probably mediated by direct binding between CENPS and FANCM, leads to synergistic activation of double-stranded DNA binding and strongly stimulates FANCM-mediated DNA remodeling. Recruited by FANCM to the Fanconi anemia (FA) core complex, which consists of CENPS, CENPX, FANCA, FANCB, FANCC, FANCE, FANCF, FANCG, FANCL, FANCM, FAAP24 and FAAP100. The FA core complex associates with Bloom syndrome (BLM) complex, which consists of at least BLM, DNA topoisomerase 3-alpha (TOP3A), RMI1/BLAP75, RPA1/RPA70 and RPA2/RPA32. The super complex between FA and BLM is called BRAFT.

Its subcellular location is the nucleus. The protein resides in the chromosome. It is found in the centromere. The protein localises to the kinetochore. Its function is as follows. DNA-binding component of the Fanconi anemia (FA) core complex. Required for the normal activation of the FA pathway, leading to monoubiquitination of the FANCI-FANCD2 complex in response to DNA damage, cellular resistance to DNA cross-linking drugs, and prevention of chromosomal breakage. In complex with CENPS (MHF heterodimer), crucial cofactor for FANCM in both binding and ATP-dependent remodeling of DNA. Stabilizes FANCM. In complex with CENPS and FANCM (but not other FANC proteins), rapidly recruited to blocked forks and promotes gene conversion at blocked replication forks. In complex with CENPS, CENPT and CENPW (CENP-T-W-S-X heterotetramer), involved in the formation of a functional kinetochore outer plate, which is essential for kinetochore-microtubule attachment and faithful mitotic progression. As a component of MHF and CENP-T-W-S-X complexes, binds DNA and bends it to form a nucleosome-like structure. DNA-binding function is fulfilled in the presence of CENPS, with the following preference for DNA substates: Holliday junction &gt; double-stranded &gt; splay arm &gt; single-stranded. Does not bind DNA on its own. This Homo sapiens (Human) protein is Centromere protein X (CENPX).